Reading from the N-terminus, the 240-residue chain is Urease accessory protein UreF (240 aa).

Belongs to the UreF family. As to quaternary structure, ureD, UreF and UreG form a complex that acts as a GTP-hydrolysis-dependent molecular chaperone, activating the urease apoprotein by helping to assemble the nickel containing metallocenter of UreC. The UreE protein probably delivers the nickel.

Its subcellular location is the cytoplasm. Functionally, required for maturation of urease via the functional incorporation of the urease nickel metallocenter. The protein is Urease accessory protein UreF of Rhodopseudomonas palustris (strain TIE-1).